The following is a 465-amino-acid chain: Argininosuccinate lyase (465 aa).

It belongs to the lyase 1 family. Argininosuccinate lyase subfamily.

It is found in the cytoplasm. It catalyses the reaction 2-(N(omega)-L-arginino)succinate = fumarate + L-arginine. Its pathway is amino-acid biosynthesis; L-arginine biosynthesis; L-arginine from L-ornithine and carbamoyl phosphate: step 3/3. This chain is Argininosuccinate lyase, found in Nitrobacter winogradskyi (strain ATCC 25391 / DSM 10237 / CIP 104748 / NCIMB 11846 / Nb-255).